We begin with the raw amino-acid sequence, 700 residues long: Elongation factor G (700 aa).

Positions 8 to 290 constitute a tr-type G domain; that stretch reads ERYRNIGISA…GVIDFMPSPI (283 aa). Residues 17-24, 88-92, and 142-145 each bind GTP; these read AHIDAGKT, DTPGH, and NKMD.

It belongs to the TRAFAC class translation factor GTPase superfamily. Classic translation factor GTPase family. EF-G/EF-2 subfamily.

It is found in the cytoplasm. In terms of biological role, catalyzes the GTP-dependent ribosomal translocation step during translation elongation. During this step, the ribosome changes from the pre-translocational (PRE) to the post-translocational (POST) state as the newly formed A-site-bound peptidyl-tRNA and P-site-bound deacylated tRNA move to the P and E sites, respectively. Catalyzes the coordinated movement of the two tRNA molecules, the mRNA and conformational changes in the ribosome. The polypeptide is Elongation factor G (Methylibium petroleiphilum (strain ATCC BAA-1232 / LMG 22953 / PM1)).